The following is a 507-amino-acid chain: MESWPWMAVVVLLGLTVRWTVSLSSYSGAGKPPMFGDYEAQRHWQEITLNLPVKQWYFNSSDNNLLYWGLDYPPLTAYHSLLCAYVAKFINPDWVALHTSRGYESQAHKLFMRATVLAADLLIYVPAVLLYCYSLKEISPKRKIASALCILLYPGLILIDYGHFQYNSVSLGFALWGVLGVSWDWDLLGSLAFCLALNYKQMELYHSLPFFCFLLGKCFKKGLKGKGLALFIRIACTVLASFLLCWLPFLTEREHALQVVRRLFPVDRGLFEDKVANIWCSVNVFLKIKDTLPRHIQIAISFCFTLLSLLPACIKLTVRPSCKGFRFTLVSCALSFFLFSFQVHEKSILLVSLPVCLVLTEIPFMSTWFLLVSTFSMLPLLLKDELLLPSVVTVMAFVIACGTFFPMLENTSEEQLQLKSFAVSVRRHLPGFTFLPRIMQCLFLSSVITMVLLTILSVTLDPPQKLPDLFPVLICFVSCVNFVFFLVYFNIVIMWDSKNGRNRKKIE.

The Cytoplasmic portion of the chain corresponds to 1–2 (ME). The helical transmembrane segment at 3–23 (SWPWMAVVVLLGLTVRWTVSL) threads the bilayer. Topologically, residues 24-114 (SSYSGAGKPP…SQAHKLFMRA (91 aa)) are lumenal. Asn59 carries N-linked (GlcNAc...) asparagine glycosylation. A helical transmembrane segment spans residues 115-135 (TVLAADLLIYVPAVLLYCYSL). Residues 136-143 (KEISPKRK) lie on the Cytoplasmic side of the membrane. Residues 144-164 (IASALCILLYPGLILIDYGHF) form a helical membrane-spanning segment. Residues 165–172 (QYNSVSLG) are Lumenal-facing. The chain crosses the membrane as a helical span at residues 173–193 (FALWGVLGVSWDWDLLGSLAF). Over 194 to 229 (CLALNYKQMELYHSLPFFCFLLGKCFKKGLKGKGLA) the chain is Cytoplasmic. The helical transmembrane segment at 230 to 250 (LFIRIACTVLASFLLCWLPFL) threads the bilayer. Residues 251–297 (TEREHALQVVRRLFPVDRGLFEDKVANIWCSVNVFLKIKDTLPRHIQ) are Lumenal-facing. Residues 298–318 (IAISFCFTLLSLLPACIKLTV) traverse the membrane as a helical segment. Over 319 to 332 (RPSCKGFRFTLVSC) the chain is Cytoplasmic. The chain crosses the membrane as a helical span at residues 333–353 (ALSFFLFSFQVHEKSILLVSL). The Lumenal portion of the chain corresponds to 354–361 (PVCLVLTE). Residues 362-382 (IPFMSTWFLLVSTFSMLPLLL) traverse the membrane as a helical segment. The Cytoplasmic portion of the chain corresponds to 383-385 (KDE). The helical transmembrane segment at 386 to 406 (LLLPSVVTVMAFVIACGTFFP) threads the bilayer. At 407–437 (MLENTSEEQLQLKSFAVSVRRHLPGFTFLPR) the chain is on the lumenal side. The chain crosses the membrane as a helical span at residues 438–458 (IMQCLFLSSVITMVLLTILSV). The Cytoplasmic segment spans residues 459–468 (TLDPPQKLPD). The chain crosses the membrane as a helical span at residues 469-489 (LFPVLICFVSCVNFVFFLVYF). The Lumenal segment spans residues 490–507 (NIVIMWDSKNGRNRKKIE).

Belongs to the ALG6/ALG8 glucosyltransferase family.

The protein localises to the endoplasmic reticulum membrane. The enzyme catalyses an alpha-D-Man-(1-&gt;2)-alpha-D-Man-(1-&gt;2)-alpha-D-Man-(1-&gt;3)-[alpha-D-Man-(1-&gt;2)-alpha-D-Man-(1-&gt;3)-[alpha-D-Man-(1-&gt;2)-alpha-D-Man-(1-&gt;6)]-alpha-D-Man-(1-&gt;6)]-beta-D-Man-(1-&gt;4)-beta-D-GlcNAc-(1-&gt;4)-alpha-D-GlcNAc-diphospho-di-trans,poly-cis-dolichol + a di-trans,poly-cis-dolichyl beta-D-glucosyl phosphate = an alpha-D-Glc-(1-&gt;3)-alpha-D-Man-(1-&gt;2)-alpha-D-Man-(1-&gt;2)-alpha-D-Man-(1-&gt;3)-[alpha-D-Man-(1-&gt;2)-alpha-D-Man-(1-&gt;3)-[alpha-D-Man-(1-&gt;2)-alpha-D-Man-(1-&gt;6)]-alpha-D-Man-(1-&gt;6)]-beta-D-Man-(1-&gt;4)-beta-D-GlcNAc-(1-&gt;4)-alpha-D-GlcNAc-diphospho-di-trans,poly-cis-dolichol + a di-trans,poly-cis-dolichyl phosphate + H(+). Its pathway is protein modification; protein glycosylation. Its function is as follows. Dolichyl pyrophosphate Man9GlcNAc2 alpha-1,3-glucosyltransferase that operates in the biosynthetic pathway of dolichol-linked oligosaccharides, the glycan precursors employed in protein asparagine (N)-glycosylation. The assembly of dolichol-linked oligosaccharides begins on the cytosolic side of the endoplasmic reticulum membrane and finishes in its lumen. The sequential addition of sugars to dolichol pyrophosphate produces dolichol-linked oligosaccharides containing fourteen sugars, including two GlcNAcs, nine mannoses and three glucoses. Once assembled, the oligosaccharide is transferred from the lipid to nascent proteins by oligosaccharyltransferases. In the lumen of the endoplasmic reticulum, adds the first glucose residue from dolichyl phosphate glucose (Dol-P-Glc) onto the lipid-linked oligosaccharide intermediate Man(9)GlcNAc(2)-PP-Dol to produce Glc(1)Man(9)GlcNAc(2)-PP-Dol. Glc(1)Man(9)GlcNAc(2)-PP-Dol is a substrate for ALG8, the following enzyme in the biosynthetic pathway. In Mus musculus (Mouse), this protein is Dolichyl pyrophosphate Man9GlcNAc2 alpha-1,3-glucosyltransferase.